The following is a 475-amino-acid chain: Ribulose bisphosphate carboxylase large chain (475 aa).

Residues 1–2 (MS) constitute a propeptide that is removed on maturation. Position 3 is an N-acetylproline (Pro-3). Lys-14 bears the N6,N6,N6-trimethyllysine mark. Substrate contacts are provided by Asn-123 and Thr-173. Catalysis depends on Lys-175, which acts as the Proton acceptor. A substrate-binding site is contributed by Lys-177. Positions 201, 203, and 204 each coordinate Mg(2+). Lys-201 carries the post-translational modification N6-carboxylysine. The Proton acceptor role is filled by His-294. Substrate contacts are provided by Arg-295, His-327, and Ser-379.

Belongs to the RuBisCO large chain family. Type I subfamily. Heterohexadecamer of 8 large chains and 8 small chains; disulfide-linked. The disulfide link is formed within the large subunit homodimers. Requires Mg(2+) as cofactor. Post-translationally, the disulfide bond which can form in the large chain dimeric partners within the hexadecamer appears to be associated with oxidative stress and protein turnover.

It localises to the plastid. It is found in the chloroplast. The catalysed reaction is 2 (2R)-3-phosphoglycerate + 2 H(+) = D-ribulose 1,5-bisphosphate + CO2 + H2O. It carries out the reaction D-ribulose 1,5-bisphosphate + O2 = 2-phosphoglycolate + (2R)-3-phosphoglycerate + 2 H(+). Its function is as follows. RuBisCO catalyzes two reactions: the carboxylation of D-ribulose 1,5-bisphosphate, the primary event in carbon dioxide fixation, as well as the oxidative fragmentation of the pentose substrate in the photorespiration process. Both reactions occur simultaneously and in competition at the same active site. The protein is Ribulose bisphosphate carboxylase large chain of Mesostigma viride (Green alga).